The following is a 613-amino-acid chain: Leucine-rich repeat and immunoglobulin-like domain-containing nogo receptor-interacting protein 1 (613 aa).

The first 34 residues, 1–34 (MLAGEASMRSPILACWQPILLLMLGSILSGSATG), serve as a signal peptide directing secretion. 2 disulfide bridges follow: Cys-35–Cys-41 and Cys-39–Cys-50. The 30-residue stretch at 35-64 (CPPRCECSAQERAVLCHRKRFMVVPEGIPT) folds into the LRRNT domain. Over 35-554 (CPPRCECSAQ…FDIKTLIIAT (520 aa)) the chain is Extracellular. LRR repeat units lie at residues 65 to 86 (ETRQ…EFAN), 89 to 110 (HLEE…AFNN), 113 to 134 (NLRT…VFTG), 137 to 158 (NLTK…MFQD), 161 to 182 (NLKS…AFSG), 185 to 206 (SLEQ…ALSH), 209 to 230 (GLIV…SFKR), 257 to 278 (NLTS…SVRH), 281 to 302 (YLRF…MLHD), 305 to 326 (RLQE…AFRG), and 329 to 350 (YLRI…AFHS). N-linked (GlcNAc...) asparagine glycosylation occurs at Asn-137. N-linked (GlcNAc...) asparagine glycosylation is present at Asn-195. Residues Asn-257, Asn-267, and Asn-286 are each glycosylated (N-linked (GlcNAc...) asparagine). Asn-334 carries N-linked (GlcNAc...) asparagine glycosylation. The LRRCT domain maps to 362 to 416 (NPLACDCRLLWVFRRRWRLNFNKQQPTCSTPEFVQGKEFKDFPDVLLPNYFTCRR). Cystine bridges form between Cys-366–Cys-389, Cys-368–Cys-414, and Cys-439–Cys-490. Positions 404 to 508 (PDVLLPNYFT…DTMLAHLHVR (105 aa)) constitute an Ig-like C2-type domain. N-linked (GlcNAc...) asparagine glycosylation is found at Asn-485, Asn-498, Asn-519, Asn-530, and Asn-535. Residues 555-575 (TMGFISFLGVVLFCLVLLFLW) form a helical membrane-spanning segment. The Cytoplasmic portion of the chain corresponds to 576 to 613 (SRGKGNTKHNIEIEYVPRKSDAGISSADAPRKFNMKMI).

As to quaternary structure, homotetramer. Forms ternary complex with RTN4R/NGFR and RTN4R/TNFRSF19. Post-translationally, N-glycosylated. Contains predominantly high-mannose glycans.

Its subcellular location is the cell membrane. Its function is as follows. Functional component of the Nogo receptor signaling complex (RTN4R/NGFR) in RhoA activation responsible for some inhibition of axonal regeneration by myelin-associated factors. Is also an important negative regulator of oligodentrocyte differentiation and axonal myelination. The sequence is that of Leucine-rich repeat and immunoglobulin-like domain-containing nogo receptor-interacting protein 1 (LINGO1) from Gallus gallus (Chicken).